A 411-amino-acid chain; its full sequence is 2,3-bisphosphoglycerate-independent phosphoglycerate mutase (411 aa).

This sequence belongs to the BPG-independent phosphoglycerate mutase family. A-PGAM subfamily. As to quaternary structure, homotetramer. Mg(2+) serves as cofactor.

The catalysed reaction is (2R)-2-phosphoglycerate = (2R)-3-phosphoglycerate. The protein operates within carbohydrate degradation; glycolysis; pyruvate from D-glyceraldehyde 3-phosphate: step 3/5. Inhibited to approximately 20% by EDTA. In terms of biological role, catalyzes the interconversion of 2-phosphoglycerate and 3-phosphoglycerate. This Pyrococcus furiosus (strain ATCC 43587 / DSM 3638 / JCM 8422 / Vc1) protein is 2,3-bisphosphoglycerate-independent phosphoglycerate mutase (apgM).